Consider the following 646-residue polypeptide: EF-hand calcium-binding domain-containing protein 6 (646 aa).

EF-hand domains follow at residues 1–27, 28–63, 109–144, 214–249, 321–356, and 357–392; these read FLET…FDIP, LTPR…NYSP, DCYQ…CGCS, SSQL…FCHK, SHYH…NVQI, and LTDE…ERAA. The residue at position 29 (Thr29) is a Phosphothreonine. The segment at 390–452 is disordered; it reads RAATPTATGD…TTAIPGTPPL (63 aa). The segment covering 432–446 has biased composition (polar residues); sequence KPQSHPCTAASTTAI. Position 435 is a phosphoserine (Ser435). 2 positions are modified to phosphothreonine: Thr439 and Thr449. The segment at 448 to 646 is interaction with PARK7; sequence GTPPLQNCDP…YNDFLRAFLQ (199 aa). EF-hand domains are found at residues 468 to 503, 504 to 539, 579 to 614, and 615 to 646; these read GCWR…FNLD, ISKE…LLKA, HCWR…YSIN, and LSEE…AFLQ. The interval 552–646 is interaction with AR; the sequence is NAHKMKDSGA…YNDFLRAFLQ (95 aa).

Microtubule inner protein component of sperm flagellar doublet microtubules. Binds PARK7. Part of a ternary complex containing PARK7, EFCAB6/DJBP and AR.

Its subcellular location is the nucleus. It localises to the cytoplasm. The protein resides in the cytoskeleton. It is found in the flagellum axoneme. Its function is as follows. Negatively regulates the androgen receptor by recruiting histone deacetylase complex, and protein DJ-1 antagonizes this inhibition by abrogation of this complex. Microtubule inner protein (MIP) part of the dynein-decorated doublet microtubules (DMTs) in cilia axoneme, which is required for motile cilia beating. This is EF-hand calcium-binding domain-containing protein 6 (EFCAB6) from Macaca fascicularis (Crab-eating macaque).